A 221-amino-acid polypeptide reads, in one-letter code: Small ribosomal subunit protein uS3 (221 aa).

The KH type-2 domain occupies 39–107; that stretch reads LRKFLKDKLK…EVFLSIQEVR (69 aa).

The protein belongs to the universal ribosomal protein uS3 family. In terms of assembly, part of the 30S ribosomal subunit. Forms a tight complex with proteins S10 and S14.

Its function is as follows. Binds the lower part of the 30S subunit head. Binds mRNA in the 70S ribosome, positioning it for translation. The chain is Small ribosomal subunit protein uS3 from Bdellovibrio bacteriovorus (strain ATCC 15356 / DSM 50701 / NCIMB 9529 / HD100).